The following is a 505-amino-acid chain: ATP synthase subunit alpha (505 aa).

171–178 (GDRQTGKT) serves as a coordination point for ATP.

The protein belongs to the ATPase alpha/beta chains family. In terms of assembly, F-type ATPases have 2 components, CF(1) - the catalytic core - and CF(0) - the membrane proton channel. CF(1) has five subunits: alpha(3), beta(3), gamma(1), delta(1), epsilon(1). CF(0) has three main subunits: a(1), b(2) and c(9-12). The alpha and beta chains form an alternating ring which encloses part of the gamma chain. CF(1) is attached to CF(0) by a central stalk formed by the gamma and epsilon chains, while a peripheral stalk is formed by the delta and b chains.

The protein resides in the cell inner membrane. The catalysed reaction is ATP + H2O + 4 H(+)(in) = ADP + phosphate + 5 H(+)(out). Functionally, produces ATP from ADP in the presence of a proton gradient across the membrane. The alpha chain is a regulatory subunit. In Campylobacter curvus (strain 525.92), this protein is ATP synthase subunit alpha.